The sequence spans 298 residues: Porphobilinogen deaminase (298 aa).

An S-(dipyrrolylmethanemethyl)cysteine modification is found at Cys-239.

It belongs to the HMBS family. In terms of assembly, monomer. Requires dipyrromethane as cofactor.

It catalyses the reaction 4 porphobilinogen + H2O = hydroxymethylbilane + 4 NH4(+). Its pathway is porphyrin-containing compound metabolism; protoporphyrin-IX biosynthesis; coproporphyrinogen-III from 5-aminolevulinate: step 2/4. Tetrapolymerization of the monopyrrole PBG into the hydroxymethylbilane pre-uroporphyrinogen in several discrete steps. This is Porphobilinogen deaminase from Ehrlichia canis (strain Jake).